The sequence spans 524 residues: Cytokinin dehydrogenase 4 (524 aa).

The signal sequence occupies residues 1–26 (MTNTLCLSLITLITLFISLTPTLIKS). Residues Asn39 and Asn58 are each glycosylated (N-linked (GlcNAc...) asparagine). The 190-residue stretch at 60–249 (TDENPGAVLC…TRARIALDHA (190 aa)) folds into the FAD-binding PCMH-type domain. Ala104, Gly106, and Gly108 together coordinate FAD. Position 109 is a pros-8alpha-FAD histidine (His109). Residues Ser110 and Gln114 each coordinate FAD. Asn124 carries an N-linked (GlcNAc...) asparagine glycan. Residues Asp173, Ser178, Ser184, Ile188, and Ile239 each coordinate FAD. N-linked (GlcNAc...) asparagine glycosylation is present at Asn411. FAD-binding residues include Tyr482, Ser517, and Gln520.

This sequence belongs to the oxygen-dependent FAD-linked oxidoreductase family. It depends on FAD as a cofactor. In terms of tissue distribution, expressed in trichomes and in developing stomata of young growing leaves. Strong expression in stipules and in the root cap, but not detected in the root meristem.

It is found in the secreted. Its subcellular location is the extracellular space. The catalysed reaction is N(6)-dimethylallyladenine + A + H2O = 3-methyl-2-butenal + adenine + AH2. Catalyzes the oxidation of cytokinins, a family of N(6)-substituted adenine derivatives that are plant hormones, where the substituent is an isopentenyl group. The polypeptide is Cytokinin dehydrogenase 4 (CKX4) (Arabidopsis thaliana (Mouse-ear cress)).